A 406-amino-acid polypeptide reads, in one-letter code: Pyruvate dehydrogenase E1 component subunit beta-2, chloroplastic (406 aa).

Residues 1 to 44 constitute a chloroplast transit peptide; that stretch reads MSSIIHGAGAATTTLSTFNSVDSKKLFVAPSRTNLSVRSQRYIV. E142 lines the thiamine diphosphate pocket. Positions 195, 243, 244, and 248 each coordinate K(+).

As to quaternary structure, tetramer of 2 alpha and 2 beta subunits. Thiamine diphosphate serves as cofactor.

It localises to the plastid. Its subcellular location is the chloroplast. The enzyme catalyses N(6)-[(R)-lipoyl]-L-lysyl-[protein] + pyruvate + H(+) = N(6)-[(R)-S(8)-acetyldihydrolipoyl]-L-lysyl-[protein] + CO2. Functionally, the pyruvate dehydrogenase complex catalyzes the overall conversion of pyruvate to acetyl-CoA and CO(2). It contains multiple copies of three enzymatic components: pyruvate dehydrogenase (E1), dihydrolipoamide acetyltransferase (E2) and lipoamide dehydrogenase (E3). This Arabidopsis thaliana (Mouse-ear cress) protein is Pyruvate dehydrogenase E1 component subunit beta-2, chloroplastic (PDH-E1 BETA).